The primary structure comprises 351 residues: Uroporphyrinogen decarboxylase (351 aa).

Substrate is bound by residues 32–36 (RQAGR), F51, D82, Y157, S211, and H326.

The protein belongs to the uroporphyrinogen decarboxylase family. Homodimer.

Its subcellular location is the cytoplasm. The enzyme catalyses uroporphyrinogen III + 4 H(+) = coproporphyrinogen III + 4 CO2. It functions in the pathway porphyrin-containing compound metabolism; protoporphyrin-IX biosynthesis; coproporphyrinogen-III from 5-aminolevulinate: step 4/4. Functionally, catalyzes the decarboxylation of four acetate groups of uroporphyrinogen III to yield coproporphyrinogen III. The sequence is that of Uroporphyrinogen decarboxylase from Caulobacter vibrioides (strain ATCC 19089 / CIP 103742 / CB 15) (Caulobacter crescentus).